The chain runs to 312 residues: Formimidoylglutamase (312 aa).

6 residues coordinate Mn(2+): His128, Asp153, His155, Asp157, Asp240, and Asp242.

The protein belongs to the arginase family. Mn(2+) serves as cofactor.

It carries out the reaction N-formimidoyl-L-glutamate + H2O = formamide + L-glutamate. The protein operates within amino-acid degradation; L-histidine degradation into L-glutamate; L-glutamate from N-formimidoyl-L-glutamate (hydrolase route): step 1/1. Catalyzes the conversion of N-formimidoyl-L-glutamate to L-glutamate and formamide. The protein is Formimidoylglutamase of Enterobacter sp. (strain 638).